The chain runs to 2671 residues: Inositol 1,4,5-trisphosphate-gated calcium channel ITPR3 (2671 aa).

The Cytoplasmic segment spans residues 1 to 2202; the sequence is MSEMSSFLHI…LIYWFSRRMT (2202 aa). MIR domains lie at 113–173, 174–224, 232–288, 295–372, and 378–434; these read GDVV…LRSN, GDNV…INLF, EEVL…VEVV, GGAG…LDPT, and DSFV…IVSV. 1D-myo-inositol 1,4,5-trisphosphate is bound by residues Arg-266, Thr-268, Leu-269, and Arg-270. The tract at residues 322–342 is disordered; sequence SYKGDASDPKAAGMGAQGRTG. The 1D-myo-inositol 1,4,5-trisphosphate site is built by Arg-503, Lys-507, Arg-510, Tyr-567, Arg-568, and Lys-569. Residue Arg-743 coordinates Ca(2+). Ser-916 and Ser-934 each carry phosphoserine. Ca(2+) contacts are provided by Glu-1122 and Glu-1125. 2 disordered regions span residues 1132–1163 and 1809–1848; these read GSGK…PPGE and NDLG…GPSL. Ser-1813, Ser-1832, and Ser-1834 each carry phosphoserine. Ca(2+) contacts are provided by Glu-1882 and Glu-1946. ATP contacts are provided by Ala-1996, Glu-2149, and Lys-2152. A helical membrane pass occupies residues 2203-2223; the sequence is LWGSISFNLAVFINIIIAFFY. Residues 2224 to 2235 lie on the Extracellular side of the membrane; that stretch reads PYMEGASTGVLD. Residues 2236-2256 form a helical membrane-spanning segment; it reads SPLISLLFWILICFSIAALFT. Residues 2257–2264 are Cytoplasmic-facing; it reads KRYSIRPL. The chain crosses the membrane as a helical span at residues 2265-2285; the sequence is IVALILRSIYYLGIGPTLNIL. The Extracellular portion of the chain corresponds to 2286–2325; it reads GALNLTNKIVFVVSFVGNRGTFIRGYKAMVMDMEFLYHVG. A helical membrane pass occupies residues 2326-2346; that stretch reads YILTSVLGLFAHELFYSILLF. Residues 2347-2368 are Cytoplasmic-facing; that stretch reads DLIYREETLFNVIKSVTRNGRS. Residues 2369 to 2389 form a helical membrane-spanning segment; sequence ILLTALLALILVYLFSIVGFL. The Extracellular portion of the chain corresponds to 2390-2496; that stretch reads FLKDDFILEV…ESLFPARVVY (107 aa). Cys-2455 and Cys-2461 form a disulfide bridge. A helical transmembrane segment spans residues 2497-2517; the sequence is DLLFFFIVIIIVLNLIFGVII. The Cytoplasmic segment spans residues 2518-2671; that stretch reads DTFADLRSEK…FVDVQNCISR (154 aa). 2 residues coordinate ATP: Cys-2538 and Phe-2539. Position 2538 (Cys-2538) interacts with Zn(2+). The Zn(2+) site is built by Cys-2541 and His-2558. ATP is bound by residues Lys-2560, His-2563, Asn-2564, and Met-2565. Residue His-2563 participates in Zn(2+) binding. Thr-2581 is a binding site for Ca(2+). Phosphoserine occurs at positions 2609 and 2670.

Belongs to the InsP3 receptor family. Homotetramer. Homodimer. Interacts with TRPC1, TRPC3 and TRPC4. Interacts with TRPV4. Interacts with SIGMAR1. Interacts with PML and AKT1. Interacts with IRAG2 (via coiled-coil domain). Interacts with CABP1. Interacts with TMBIM4/LFG4. Interacts with CEMIP. Interacts with TESPA1. Interacts with TMEM203. Interacts with BOK; regulates ITPR3 expression. Interacts with BCL2L10. Interacts with CHGA and CHGB. Phosphorylated by AKT1 on serine and/or threonine residues. Expressed in intestinal crypt and villus epithelial cells.

Its subcellular location is the endoplasmic reticulum membrane. The protein localises to the cytoplasmic vesicle. The protein resides in the secretory vesicle membrane. It catalyses the reaction Ca(2+)(in) = Ca(2+)(out). Inositol 1,4,5-trisphosphate-gated calcium channel is regulated by cytosolic calcium in a biphasic manner. At low concentrations, cytosolic calcium binds at a high-affinity juxtamembrane domain (JD) calcium binding site, allowing ITPR3 to activate by escaping a low-energy resting state through an ensemble of preactivated states. At high cytosolic calcium concentrations, ITPR3 preferentially enters an inhibited state stabilized by calcium binding at a second, low-affinity cytoplasmic domain (CD) calcium binding site. Inositol 1,4,5-trisphosphate-gated calcium channel that, upon 1D-myo-inositol 1,4,5-trisphosphate binding, transports calcium from the endoplasmic reticulum lumen to cytoplasm, thus releasing the intracellular calcium and therefore participates in cellular calcium ion homeostasis. 1D-myo-inositol 1,4,5-trisphosphate binds to the ligand-free channel without altering its global conformation, yielding the low-energy resting state, then progresses through resting-to preactivated transitions to the higher energy preactivated state, which increases affinity for calcium, promoting binding of the low basal cytosolic calcium at the juxtamembrane domain (JD) site, favoring the transition through the ensemble of high-energy intermediate states along the trajectory to the fully-open activated state. Upon opening, releases calcium in the cytosol where it can bind to the low-affinity cytoplasmic domain (CD) site and stabilizes the inhibited state to terminate calcium release. This is Inositol 1,4,5-trisphosphate-gated calcium channel ITPR3 from Homo sapiens (Human).